Reading from the N-terminus, the 110-residue chain is Large ribosomal subunit protein uL22 (110 aa).

Belongs to the universal ribosomal protein uL22 family. In terms of assembly, part of the 50S ribosomal subunit.

Functionally, this protein binds specifically to 23S rRNA; its binding is stimulated by other ribosomal proteins, e.g. L4, L17, and L20. It is important during the early stages of 50S assembly. It makes multiple contacts with different domains of the 23S rRNA in the assembled 50S subunit and ribosome. The globular domain of the protein is located near the polypeptide exit tunnel on the outside of the subunit, while an extended beta-hairpin is found that lines the wall of the exit tunnel in the center of the 70S ribosome. The protein is Large ribosomal subunit protein uL22 of Photobacterium profundum (strain SS9).